Consider the following 419-residue polypeptide: UDP-N-acetylglucosamine 1-carboxyvinyltransferase 2 (419 aa).

22-23 is a phosphoenolpyruvate binding site; the sequence is KN. R92 is a binding site for UDP-N-acetyl-alpha-D-glucosamine. The active-site Proton donor is C116. C116 is modified (2-(S-cysteinyl)pyruvic acid O-phosphothioketal). Residues 121–125, D306, and I328 contribute to the UDP-N-acetyl-alpha-D-glucosamine site; that span reads RPIDL.

It belongs to the EPSP synthase family. MurA subfamily.

Its subcellular location is the cytoplasm. It catalyses the reaction phosphoenolpyruvate + UDP-N-acetyl-alpha-D-glucosamine = UDP-N-acetyl-3-O-(1-carboxyvinyl)-alpha-D-glucosamine + phosphate. It functions in the pathway cell wall biogenesis; peptidoglycan biosynthesis. Its function is as follows. Cell wall formation. Adds enolpyruvyl to UDP-N-acetylglucosamine. The protein is UDP-N-acetylglucosamine 1-carboxyvinyltransferase 2 of Streptococcus mutans serotype c (strain ATCC 700610 / UA159).